A 445-amino-acid chain; its full sequence is Argininosuccinate synthase (445 aa).

ATP contacts are provided by residues 17–25 and Ala-43; that span reads AFSGGLDTS. Position 99 (Tyr-99) interacts with L-citrulline. ATP is bound by residues Gly-129 and Thr-131. 3 residues coordinate L-aspartate: Thr-131, Asn-135, and Asp-136. L-citrulline is bound at residue Asn-135. Asp-136 contributes to the ATP binding site. Residues Arg-139 and Ser-192 each coordinate L-citrulline. Asp-194 is an ATP binding site. L-citrulline is bound by residues Thr-201, Glu-203, and Glu-280.

The protein belongs to the argininosuccinate synthase family. Type 2 subfamily. Homotetramer.

The protein localises to the cytoplasm. It catalyses the reaction L-citrulline + L-aspartate + ATP = 2-(N(omega)-L-arginino)succinate + AMP + diphosphate + H(+). It functions in the pathway amino-acid biosynthesis; L-arginine biosynthesis; L-arginine from L-ornithine and carbamoyl phosphate: step 2/3. The chain is Argininosuccinate synthase from Rhodopseudomonas palustris (strain BisB5).